The following is a 177-amino-acid chain: RNA pyrophosphohydrolase (177 aa).

In terms of domain architecture, Nudix hydrolase spans 6–149 (GYRPNVGIVI…KRDVYRRVMK (144 aa)). Positions 38–59 (GGINAGETAEQAMYRELFEEVG) match the Nudix box motif.

The protein belongs to the Nudix hydrolase family. RppH subfamily. A divalent metal cation serves as cofactor.

Functionally, accelerates the degradation of transcripts by removing pyrophosphate from the 5'-end of triphosphorylated RNA, leading to a more labile monophosphorylated state that can stimulate subsequent ribonuclease cleavage. The chain is RNA pyrophosphohydrolase from Edwardsiella ictaluri (strain 93-146).